Consider the following 25-residue polypeptide: Panurgine K (25 aa).

2 disulfide bridges follow: cysteine 8-cysteine 23 and cysteine 11-cysteine 19.

The protein resides in the target cell membrane. It is found in the secreted. In terms of biological role, antimicrobial peptide active against Gram-positive bacteria M.luteus (MIC=1.6 uM) and B.subtilis (MIC=3.3 uM). Less active against Gram-negative bacteria E.coli (MIC=63.3 uM) and yeast C.albicans (MIC=24.2 uM). Not active against S.aureus and P.aeruginosa. Has no hemolytic activity against human erythrocytes. Probably acts by disrupting membranes of target cells. The protein is Panurgine K of Panurgus calcaratus (Solitary bee).